The following is a 367-amino-acid chain: tRNA-specific 2-thiouridylase MnmA (367 aa).

ATP contacts are provided by residues 13 to 20 and Met-39; that span reads GLSGGVDS. An interaction with target base in tRNA region spans residues 99–101; sequence NPD. Cys-104 (nucleophile) is an active-site residue. A disulfide bond links Cys-104 and Cys-200. Gly-128 serves as a coordination point for ATP. The interaction with tRNA stretch occupies residues 150–152; it reads KDQ. Cys-200 acts as the Cysteine persulfide intermediate in catalysis. Positions 307–308 are interaction with tRNA; sequence RY.

This sequence belongs to the MnmA/TRMU family.

The protein localises to the cytoplasm. The catalysed reaction is S-sulfanyl-L-cysteinyl-[protein] + uridine(34) in tRNA + AH2 + ATP = 2-thiouridine(34) in tRNA + L-cysteinyl-[protein] + A + AMP + diphosphate + H(+). Catalyzes the 2-thiolation of uridine at the wobble position (U34) of tRNA, leading to the formation of s(2)U34. The chain is tRNA-specific 2-thiouridylase MnmA from Neisseria meningitidis serogroup B (strain ATCC BAA-335 / MC58).